The primary structure comprises 416 residues: UDP-N-acetylmuramoylalanine--D-glutamate ligase (416 aa).

Position 108–114 (108–114 (GTTGKTT)) interacts with ATP.

The protein belongs to the MurCDEF family.

The protein resides in the cytoplasm. It carries out the reaction UDP-N-acetyl-alpha-D-muramoyl-L-alanine + D-glutamate + ATP = UDP-N-acetyl-alpha-D-muramoyl-L-alanyl-D-glutamate + ADP + phosphate + H(+). The protein operates within cell wall biogenesis; peptidoglycan biosynthesis. Cell wall formation. Catalyzes the addition of glutamate to the nucleotide precursor UDP-N-acetylmuramoyl-L-alanine (UMA). In Chlamydia trachomatis serovar L2b (strain UCH-1/proctitis), this protein is UDP-N-acetylmuramoylalanine--D-glutamate ligase.